Here is a 232-residue protein sequence, read N- to C-terminus: Ornithine carbamoyltransferase (232 aa).

Carbamoyl phosphate contacts are provided by residues Q15, R39, and 66-69; that span reads HPTQ. Residues N99, D163, and 167–168 contribute to the L-ornithine site; that span reads SM. Carbamoyl phosphate-binding positions include 204-207 and T232; that span reads HCLP.

This sequence belongs to the aspartate/ornithine carbamoyltransferase superfamily. OTCase family.

The protein resides in the cytoplasm. It catalyses the reaction carbamoyl phosphate + L-ornithine = L-citrulline + phosphate + H(+). It functions in the pathway amino-acid biosynthesis; L-arginine biosynthesis; L-arginine from L-ornithine and carbamoyl phosphate: step 1/3. In terms of biological role, reversibly catalyzes the transfer of the carbamoyl group from carbamoyl phosphate (CP) to the N(epsilon) atom of ornithine (ORN) to produce L-citrulline. In Neisseria flava, this protein is Ornithine carbamoyltransferase (argF).